Consider the following 154-residue polypeptide: Large ribosomal subunit protein uL22c (154 aa).

The protein belongs to the universal ribosomal protein uL22 family. As to quaternary structure, part of the 50S ribosomal subunit.

The protein localises to the plastid. It is found in the chloroplast. In terms of biological role, this protein binds specifically to 23S rRNA. The globular domain of the protein is located near the polypeptide exit tunnel on the outside of the subunit, while an extended beta-hairpin is found that lines the wall of the exit tunnel in the center of the 70S ribosome. This chain is Large ribosomal subunit protein uL22c (rpl22), found in Helianthus annuus (Common sunflower).